The sequence spans 241 residues: Ribulose-phosphate 3-epimerase 1 (241 aa).

Substrate is bound at residue S21. Residues H46, D48, and H79 each contribute to the a divalent metal cation site. Residue D48 is the Proton acceptor of the active site. Residues H79, 155–158 (GFGG), 192–194 (DGG), and 214–215 (GS) each bind substrate. D192 contributes to the a divalent metal cation binding site. D192 acts as the Proton donor in catalysis.

It belongs to the ribulose-phosphate 3-epimerase family. A divalent metal cation serves as cofactor.

It catalyses the reaction D-ribulose 5-phosphate = D-xylulose 5-phosphate. The protein operates within carbohydrate degradation. Functionally, catalyzes the reversible epimerization of D-ribulose 5-phosphate to D-xylulose 5-phosphate. This is Ribulose-phosphate 3-epimerase 1 from Cupriavidus necator (strain ATCC 17699 / DSM 428 / KCTC 22496 / NCIMB 10442 / H16 / Stanier 337) (Ralstonia eutropha).